Here is a 492-residue protein sequence, read N- to C-terminus: uncharacterized protein (492 aa).

A helical transmembrane segment spans residues 30-46 (YVCLSVAVAAVGYANYM). Residues 144–210 (NYYDVLNVNE…IRKNIYDNEG (67 aa)) enclose the J domain.

It is found in the membrane. This is an uncharacterized protein from Plasmodium falciparum (isolate 3D7).